Reading from the N-terminus, the 1018-residue chain is Fibronectin-binding protein A (1018 aa).

The signal sequence occupies residues 1–36 (MKNNLRYGIRKHKLGAASVFLGTMIVVGMGQDKEAA). A YSIRK-G/S signaling motif motif is present at residues 7-18 (YGIRKHKLGAAS). The segment at 37–511 (ASEQKTTTVE…SNKANGNGKN (475 aa)) is ligand-binding A region. Disordered regions lie at residues 38–61 (SEQK…SETQ) and 78–195 (ATVT…ETGT). 2 stretches are compositionally biased toward polar residues: residues 39-61 (EQKT…SETQ) and 78-92 (ATVT…QVTT). Basic and acidic residues predominate over residues 112–126 (TVKEEVVKEEAKPQV). The segment covering 129 to 139 (TTQSQDNSGDQ) has biased composition (polar residues). The tract at residues 194–511 (GTDVTSKVTV…SNKANGNGKN (318 aa)) is fibrinogen/elastin/tropoelastin-binding. Residues 512-872 (GPIIQNNKFE…EGQQTIEEDT (361 aa)) are fibronectin-binding. One copy of the B-1 repeat lies at 545-574 (EEYDSSTLDIDYHTAIDGGGGYVDGYIETI). The 2 X approximate tandem repeats stretch occupies residues 545 to 604 (EEYDSSTLDIDYHTAIDGGGGYVDGYIETIEETDSSAIDIDYHTAVDSEAGHVGGYTESS). The stretch at 575–604 (EETDSSAIDIDYHTAVDSEAGHVGGYTESS) is one B-2 repeat. Disordered regions lie at residues 595-622 (GHVG…NSKH), 740-813 (LGYE…DIDF), and 827-997 (EIIE…GMLF). Residues 745–782 (GQNSGNQSFEEDTEEDKPKYEQGGNIVDIDFDSVPQIH) form a D-1 repeat. Residues 745–878 (GQNSGNQSFE…EEDTTPPIVP (134 aa)) form a 4 X approximate tandem repeats region. The D-2 repeat unit spans residues 783–820 (GQNKGNQSFEEDTEKDKPKYEHGGNIIDIDFDSVPHIH). The D-3 repeat unit spans residues 821-859 (GFNKHTEIIEEDTNKDKPSYQFGGHNSVDFEEDTLPKVS). Residues 827–838 (EIIEEDTNKDKP) show a composition bias toward basic and acidic residues. One copy of the D-4; truncated repeat lies at 860 to 878 (GQNEGQQTIEEDTTPPIVP). The span at 875–938 (PIVPPTPPTP…PAEPGKPVPP (64 aa)) shows a compositional bias: pro residues. WR repeat units lie at residues 879–892 (PTPP…EPET), 893–906 (PTPP…EPET), 907–920 (PTPP…EPET), 921–934 (PTPP…EPGK), and 935–948 (PVPP…KPSK). A 5 X tandem repeats, Pro-rich (WR) region spans residues 879–948 (PTPPTPEVPS…AKEEPKKPSK (70 aa)). The short motif at 982 to 986 (LPETG) is the LPXTG sorting signal element. Pentaglycyl murein peptidoglycan amidated threonine is present on Thr-985. Residues 986 to 1018 (GGEESTNKGMLFGGLFSILGLALLRRNKKNHKA) constitute a propeptide, removed by sortase.

Its subcellular location is the secreted. The protein resides in the cell wall. Its function is as follows. Promotes bacterial attachment to multiple substrates, such as fibronectin (Fn), fibrinogen (Fg), elastin peptides and tropoelastin. This confers to S.aureus the ability to invade endothelial cells. Promotes adherence to and aggregation of activated platelets. The protein is Fibronectin-binding protein A of Staphylococcus aureus (strain USA300).